A 385-amino-acid polypeptide reads, in one-letter code: Deoxyguanosinetriphosphate triphosphohydrolase-like protein (385 aa).

The 123-residue stretch at 75 to 197 (RLTHTLEVGQ…VDAADALAYT (123 aa)) folds into the HD domain.

The protein belongs to the dGTPase family. Type 2 subfamily.

This chain is Deoxyguanosinetriphosphate triphosphohydrolase-like protein, found in Deinococcus geothermalis (strain DSM 11300 / CIP 105573 / AG-3a).